The sequence spans 612 residues: Actin-binding LIM protein 2 (612 aa).

LIM zinc-binding domains follow at residues 22–81, 81–141, 151–210, and 210–270; these read ILCN…LYGT, TRCF…TLVG, RSCG…KFGI, and IRCD…ARTE. The Zn(2+) site is built by C83, C86, H103, C106, C109, C112, C131, and C134. Positions 212, 215, 232, 235, 238, 241, 260, and 263 each coordinate Zn(2+). Over residues 269 to 278 the composition is skewed to basic and acidic residues; the sequence is TEDKSKETRT. Disordered regions lie at residues 269 to 295 and 341 to 433; these read TEDK…SGSP and AVGD…DNIY. Low complexity-rich tracts occupy residues 279–295 and 364–373; these read SSES…SGSP and SSPSSAGSVS. Phosphoserine is present on residues S282, S294, S365, and S368. Residues 394-416 show a composition bias toward polar residues; sequence SGRSTPSLSVHSDSRPPSSTYQQ. The residue at position 453 (S453) is a Phosphoserine. The tract at residues 471-520 is disordered; that stretch reads ADTRTNSPDLDSQSLSLSSGADQEPLQRMPGDSLYSRFPYSKPDTLPGPR. T473 is modified (phosphothreonine). A phosphoserine mark is found at S477 and S579. Over residues 477 to 489 the composition is skewed to low complexity; that stretch reads SPDLDSQSLSLSS. The HP domain occupies 544 to 612; it reads TREYKIYPYD…NDLKKKALLF (69 aa).

As to quaternary structure, interacts with F-actin and ABRA.

It is found in the cytoplasm. May act as scaffold protein. May stimulate ABRA activity and ABRA-dependent SRF transcriptional activity. This is Actin-binding LIM protein 2 (Ablim2) from Rattus norvegicus (Rat).